We begin with the raw amino-acid sequence, 515 residues long: RNA-splicing ligase RtcB homolog (515 aa).

Mn(2+)-binding residues include D121, C124, H229, H269, and H363. Position 228–232 (228–232 (NHYGE)) interacts with GMP. Residues 363–364 (HN), 412–415 (GGTM), S419, 438–441 (HGSG), and K514 contribute to the GMP site. The active-site GMP-histidine intermediate is the H438.

The protein belongs to the RtcB family. In terms of assembly, catalytic component of the tRNA-splicing ligase complex. The cofactor is Mn(2+).

The enzyme catalyses a 3'-end 3'-phospho-ribonucleotide-RNA + a 5'-end dephospho-ribonucleoside-RNA + GTP = a ribonucleotidyl-ribonucleotide-RNA + GMP + diphosphate. The catalysed reaction is a 3'-end 2',3'-cyclophospho-ribonucleotide-RNA + a 5'-end dephospho-ribonucleoside-RNA + GTP + H2O = a ribonucleotidyl-ribonucleotide-RNA + GMP + diphosphate + H(+). Catalytic subunit of the tRNA-splicing ligase complex that acts by directly joining spliced tRNA halves to mature-sized tRNAs by incorporating the precursor-derived splice junction phosphate into the mature tRNA as a canonical 3',5'-phosphodiester. May act as an RNA ligase with broad substrate specificity, and may function toward other RNAs. This chain is RNA-splicing ligase RtcB homolog, found in Theileria annulata.